The chain runs to 169 residues: NAD(P)H-quinone oxidoreductase subunit J, chloroplastic (169 aa).

It belongs to the complex I 30 kDa subunit family. In terms of assembly, NDH is composed of at least 16 different subunits, 5 of which are encoded in the nucleus.

The protein resides in the plastid. It localises to the chloroplast thylakoid membrane. The enzyme catalyses a plastoquinone + NADH + (n+1) H(+)(in) = a plastoquinol + NAD(+) + n H(+)(out). It carries out the reaction a plastoquinone + NADPH + (n+1) H(+)(in) = a plastoquinol + NADP(+) + n H(+)(out). NDH shuttles electrons from NAD(P)H:plastoquinone, via FMN and iron-sulfur (Fe-S) centers, to quinones in the photosynthetic chain and possibly in a chloroplast respiratory chain. The immediate electron acceptor for the enzyme in this species is believed to be plastoquinone. Couples the redox reaction to proton translocation, and thus conserves the redox energy in a proton gradient. The sequence is that of NAD(P)H-quinone oxidoreductase subunit J, chloroplastic from Staurastrum punctulatum (Green alga).